Here is a 407-residue protein sequence, read N- to C-terminus: WEB family protein At3g51720 (407 aa).

Coiled coils occupy residues 72-99 (KVLK…DKEN), 128-217 (SVGL…ARAA), and 247-278 (EEIL…EAEE).

It belongs to the WEB family.

This Arabidopsis thaliana (Mouse-ear cress) protein is WEB family protein At3g51720.